The primary structure comprises 166 residues: Mitochondrial fission process protein 1 (166 aa).

The next 2 helical transmembrane spans lie at 34–54 (SLVP…YVLA) and 78–98 (ALAV…IPGF). Residue K123 is modified to N6-succinyllysine. The helical transmembrane segment at 129 to 149 (LGLLAIPVIIHPIDRSVDFLL) threads the bilayer.

Belongs to the MTFP1 family.

It is found in the mitochondrion inner membrane. Its function is as follows. Involved in the mitochondrial division probably by regulating membrane fission. Loss-of-function leads to apoptosis. The chain is Mitochondrial fission process protein 1 (Mtfp1) from Mus musculus (Mouse).